The primary structure comprises 455 residues: MDAALKRSRSEEPAEILPPARDEEEEEEEGMEQGLEEEEEVDPRIQGELEKLNQSTDDINRRETELEDARQKFRSVLVEATVKLDELVKKIGKAVEDSKPYWEARRVARQAQLEAQKATQDFQRATEVLRAAKETISLAEQRLLEDDKRQFDSAWQEMLNHATQRVMEAEQTKTRSELVHKETAARYNAAMGRMRQLEKKLKRAINKSKPYFELKAKYYVQLEQLKKTVDDLQAKLTLAKGEYKMALKNLEMISDEIHERRRSSAMGPRGCGVGAEGSSTSVEDLPGSKPEPDAISVASEAFEDDSCSNFVSEDDSETQSVSSFSSGPTSPSEMPDQFPAVVRPGSLDLPSPVSLSEFGMMFPVLGPRSECSGASSPECEVERGDRAEGAENKTSDKANNNRGLSSSSGSGGSSKSQSSTSPEGQALENRMKQLSLQCSKGRDGIIADIKMVQIG.

The span at 1 to 12 shows a compositional bias: basic and acidic residues; the sequence is MDAALKRSRSEE. Residues 1-63 form a disordered region; the sequence is MDAALKRSRS…QSTDDINRRE (63 aa). The segment covering 22–41 has biased composition (acidic residues); that stretch reads DEEEEEEEGMEQGLEEEEEV. Positions 31–265 are sufficient for interaction with RAB11A and for guanine nucleotide exchange activity; sequence MEQGLEEEEE…EIHERRRSSA (235 aa). A compositionally biased stretch (basic and acidic residues) spans 42–51; that stretch reads DPRIQGELEK. 4 coiled-coil regions span residues 44–90, 97–145, 154–200, and 211–255; these read RIQG…LVKK, DSKP…RLLE, AWQE…LEKK, and YFEL…MISD. 2 disordered regions span residues 259 to 293 and 306 to 345; these read ERRR…PEPD and SCSN…VRPG. A compositionally biased stretch (acidic residues) spans 306 to 317; it reads SCSNFVSEDDSE. Residues 320–332 are compositionally biased toward low complexity; that stretch reads SVSSFSSGPTSPS. A Phosphoserine; by MAPK12 and MAPK9 modification is found at S351. The segment at 369–435 is disordered; sequence SECSGASSPE…ALENRMKQLS (67 aa). 2 positions are modified to phosphoserine: S375 and S376. A compositionally biased stretch (basic and acidic residues) spans 380-396; the sequence is EVERGDRAEGAENKTSD. Low complexity predominate over residues 403–421; that stretch reads GLSSSSGSGGSSKSQSSTS. A phosphoserine mark is found at S418 and S421.

It belongs to the SH3BP5 family. Interacts with BTK. Interacts with all isoforms of MAPK8, MAPK9, MAPK10 and MAPK12. Interacts with GDP-bound and nucleotide-free forms of RAB11A. As to expression, highly expressed in testis and ovaries. It is also expressed in a variety of tissues including spleen, lymph node, thymus, bone marrow, fetal liver, colon, small intestine and prostate.

Its subcellular location is the cytoplasmic vesicle membrane. The protein resides in the mitochondrion. Its function is as follows. Functions as a guanine nucleotide exchange factor (GEF) with specificity for RAB11A and RAB25. Inhibits the auto- and transphosphorylation activity of BTK. Plays a negative regulatory role in BTK-related cytoplasmic signaling in B-cells. May be involved in BCR-induced apoptotic cell death. In Homo sapiens (Human), this protein is SH3 domain-binding protein 5 (SH3BP5).